We begin with the raw amino-acid sequence, 356 residues long: DNA polymerase IV (356 aa).

In terms of domain architecture, UmuC spans isoleucine 6 to glycine 187. Positions 10 and 105 each coordinate Mg(2+). Residue glutamate 106 is part of the active site.

It belongs to the DNA polymerase type-Y family. Monomer. Mg(2+) serves as cofactor.

It is found in the cytoplasm. The enzyme catalyses DNA(n) + a 2'-deoxyribonucleoside 5'-triphosphate = DNA(n+1) + diphosphate. Poorly processive, error-prone DNA polymerase involved in untargeted mutagenesis. Copies undamaged DNA at stalled replication forks, which arise in vivo from mismatched or misaligned primer ends. These misaligned primers can be extended by PolIV. Exhibits no 3'-5' exonuclease (proofreading) activity. May be involved in translesional synthesis, in conjunction with the beta clamp from PolIII. This chain is DNA polymerase IV, found in Staphylococcus epidermidis (strain ATCC 12228 / FDA PCI 1200).